A 555-amino-acid chain; its full sequence is Hydrogenase-4 component G (555 aa).

This sequence belongs to the complex I 49 kDa subunit family. It depends on [4Fe-4S] cluster as a cofactor.

Its function is as follows. Possible component of hydrogenase 4. In Escherichia coli (strain K12), this protein is Hydrogenase-4 component G.